We begin with the raw amino-acid sequence, 274 residues long: Undecaprenyl-diphosphatase (274 aa).

7 helical membrane-spanning segments follow: residues 21 to 39 (FLPISSTGHLILAGALLGF), 44 to 64 (AQVFDVAIQTGAILAVILVYW), 85 to 105 (FNLAIGFFPAVLLGLLFGKAI), 109 to 129 (LFTPVVVASTFIIGGLVILWA), 185 to 205 (ATDFSFFLAIPTLIGAGVYSL), 214 to 234 (VADLPMFLTGLVFSFLSAWLC), and 247 to 267 (FVPFAYYRIGFGLMVLVTAST).

The protein belongs to the UppP family.

It localises to the cell inner membrane. It catalyses the reaction di-trans,octa-cis-undecaprenyl diphosphate + H2O = di-trans,octa-cis-undecaprenyl phosphate + phosphate + H(+). Functionally, catalyzes the dephosphorylation of undecaprenyl diphosphate (UPP). Confers resistance to bacitracin. This Verminephrobacter eiseniae (strain EF01-2) protein is Undecaprenyl-diphosphatase.